We begin with the raw amino-acid sequence, 702 residues long: Ribosomal RNA large subunit methyltransferase K/L (702 aa).

Positions 43–154 (LVYQSLMWSR…KETASIALDL (112 aa)) constitute a THUMP domain.

Belongs to the methyltransferase superfamily. RlmKL family.

The protein localises to the cytoplasm. The catalysed reaction is guanosine(2445) in 23S rRNA + S-adenosyl-L-methionine = N(2)-methylguanosine(2445) in 23S rRNA + S-adenosyl-L-homocysteine + H(+). It catalyses the reaction guanosine(2069) in 23S rRNA + S-adenosyl-L-methionine = N(2)-methylguanosine(2069) in 23S rRNA + S-adenosyl-L-homocysteine + H(+). Functionally, specifically methylates the guanine in position 2445 (m2G2445) and the guanine in position 2069 (m7G2069) of 23S rRNA. The polypeptide is Ribosomal RNA large subunit methyltransferase K/L (Escherichia coli O157:H7).